The chain runs to 104 residues: uncharacterized protein (104 aa).

The signal sequence occupies residues 1 to 23 (MDIHDYVELIALAFWVISVVSVG).

This is an uncharacterized protein from Lactobacillus helveticus (Lactobacillus suntoryeus).